The sequence spans 201 residues: ATP-dependent Clp protease proteolytic subunit (201 aa).

Ser-98 functions as the Nucleophile in the catalytic mechanism. His-123 is a catalytic residue.

The protein belongs to the peptidase S14 family. As to quaternary structure, fourteen ClpP subunits assemble into 2 heptameric rings which stack back to back to give a disk-like structure with a central cavity, resembling the structure of eukaryotic proteasomes.

It is found in the cytoplasm. The enzyme catalyses Hydrolysis of proteins to small peptides in the presence of ATP and magnesium. alpha-casein is the usual test substrate. In the absence of ATP, only oligopeptides shorter than five residues are hydrolyzed (such as succinyl-Leu-Tyr-|-NHMec, and Leu-Tyr-Leu-|-Tyr-Trp, in which cleavage of the -Tyr-|-Leu- and -Tyr-|-Trp bonds also occurs).. Cleaves peptides in various proteins in a process that requires ATP hydrolysis. Has a chymotrypsin-like activity. Plays a major role in the degradation of misfolded proteins. This Rickettsia peacockii (strain Rustic) protein is ATP-dependent Clp protease proteolytic subunit.